The following is a 215-amino-acid chain: Small ribosomal subunit protein eS1 (215 aa).

The protein belongs to the eukaryotic ribosomal protein eS1 family.

This chain is Small ribosomal subunit protein eS1, found in Thermoplasma volcanium (strain ATCC 51530 / DSM 4299 / JCM 9571 / NBRC 15438 / GSS1).